Consider the following 378-residue polypeptide: Chaperone protein DnaJ (378 aa).

Residues 6-70 (DYYDVLGVSR…QKRQQYDQFG (65 aa)) form the J domain. The CR-type zinc finger occupies 137–219 (GKTSEISYSR…CHGKGVKTQK (83 aa)). The Zn(2+) site is built by C150, C153, C167, C170, C193, C196, C207, and C210. 4 CXXCXGXG motif repeats span residues 150 to 157 (CEVCKGSG), 167 to 174 (CDKCGGSG), 193 to 200 (CDKCTGSG), and 207 to 214 (CHNCHGKG).

Belongs to the DnaJ family. Homodimer. It depends on Zn(2+) as a cofactor.

It is found in the cytoplasm. Participates actively in the response to hyperosmotic and heat shock by preventing the aggregation of stress-denatured proteins and by disaggregating proteins, also in an autonomous, DnaK-independent fashion. Unfolded proteins bind initially to DnaJ; upon interaction with the DnaJ-bound protein, DnaK hydrolyzes its bound ATP, resulting in the formation of a stable complex. GrpE releases ADP from DnaK; ATP binding to DnaK triggers the release of the substrate protein, thus completing the reaction cycle. Several rounds of ATP-dependent interactions between DnaJ, DnaK and GrpE are required for fully efficient folding. Also involved, together with DnaK and GrpE, in the DNA replication of plasmids through activation of initiation proteins. This chain is Chaperone protein DnaJ, found in Lactobacillus delbrueckii subsp. bulgaricus (strain ATCC 11842 / DSM 20081 / BCRC 10696 / JCM 1002 / NBRC 13953 / NCIMB 11778 / NCTC 12712 / WDCM 00102 / Lb 14).